A 393-amino-acid chain; its full sequence is Iripin-5 (393 aa).

The signal sequence occupies residues 1–16 (MKTLIVLMCSLVVVWA). N-linked (GlcNAc...) asparagine glycosylation is found at asparagine 198 and asparagine 245.

Belongs to the serpin family. Highly expressed in female salivary gland during blood feeding. Expressed in female midgut and ovary during blood feeding.

It is found in the secreted. Its function is as follows. Serine protease inhibitor that modulates blood feeding of ticks on vertebrate species. Inhibits host neutrophil elastase (ELANE) and proteinase 3/myeloblastin (PRTN3). Moderately inhibits host chymase, cathepsin G (CTSG), trypsin and alpha-chymotrypsin. Decreases host neutrophil migration. Decreases nitric oxide production by host macrophages. Decreases host complement activity. This is Iripin-5 from Ixodes ricinus (Common tick).